The sequence spans 394 residues: NAD(P)H-quinone oxidoreductase subunit H (394 aa).

It belongs to the complex I 49 kDa subunit family. In terms of assembly, NDH-1 can be composed of about 15 different subunits; different subcomplexes with different compositions have been identified which probably have different functions.

It is found in the cellular thylakoid membrane. It catalyses the reaction a plastoquinone + NADH + (n+1) H(+)(in) = a plastoquinol + NAD(+) + n H(+)(out). The catalysed reaction is a plastoquinone + NADPH + (n+1) H(+)(in) = a plastoquinol + NADP(+) + n H(+)(out). In terms of biological role, NDH-1 shuttles electrons from an unknown electron donor, via FMN and iron-sulfur (Fe-S) centers, to quinones in the respiratory and/or the photosynthetic chain. The immediate electron acceptor for the enzyme in this species is believed to be plastoquinone. Couples the redox reaction to proton translocation, and thus conserves the redox energy in a proton gradient. Cyanobacterial NDH-1 also plays a role in inorganic carbon-concentration. This is NAD(P)H-quinone oxidoreductase subunit H from Trichodesmium erythraeum (strain IMS101).